A 331-amino-acid chain; its full sequence is MEVERVQAIASLGQKLDTIPSEFIRSEHEQPGKTTFDGPIPEIPVIDLGDKDGIVGAVAEAAREWGLFQIINHGIPVEVIKELQRVGKEFFELPQEEKEVYAMDMVTMEGYGTKLQKETEGKKAWVDHLFHNIWPESRINYNFWPQNPPDYRKANKEYAKHLLEVMGEILTSLSLGLGLEGHVFKEALGGDAIELLLKINYYPTCPRPDLALGVPAHTDMSAITLLVPNEVPGLQVFKDDHWFDAKYIPNAIIVHIGDQIEILSNGKYKSVLHRTTVNKEKVRMSWPVFCSPPGEWMVGTLPQLVSEDTPAKYKTKKYKDYQYCKLNKLPQ.

Residues 191–292 (DAIELLLKIN…RMSWPVFCSP (102 aa)) form the Fe2OG dioxygenase domain. Residues His-217, Asp-219, and His-273 each contribute to the Fe cation site. A 2-oxoglutarate-binding site is contributed by Arg-283.

Belongs to the iron/ascorbate-dependent oxidoreductase family. The cofactor is L-ascorbate. Requires Fe(2+) as cofactor. Expressed in young cromes.

The catalysed reaction is a (2R,3R)-dihydroflavonol + 2-oxoglutarate + O2 = a flavonol + succinate + CO2 + H2O. The enzyme catalyses (2R,3R)-dihydrokaempferol + 2-oxoglutarate + O2 = kaempferol + succinate + CO2 + H2O + H(+). It catalyses the reaction (2R,3R)-dihydroquercetin + 2-oxoglutarate + O2 = quercetin + succinate + CO2 + H2O + H(+). It carries out the reaction (2R,3R)-dihydromyricetin + 2-oxoglutarate + O2 = myricetin + succinate + CO2 + H2O + H(+). It participates in flavonoid metabolism. In terms of biological role, catalyzes the formation of flavonols from dihydroflavonols. Can act on dihydrokaempferol to produce kaempferol, on dihydroquercetin to produce quercitin and on dihydromyricetin to produce myricetin. The protein is Flavonol synthase 1 of Crocosmia x crocosmiiflora (Montbretia).